We begin with the raw amino-acid sequence, 195 residues long: Imidazoleglycerol-phosphate dehydratase (195 aa).

The protein belongs to the imidazoleglycerol-phosphate dehydratase family.

The protein localises to the cytoplasm. It catalyses the reaction D-erythro-1-(imidazol-4-yl)glycerol 3-phosphate = 3-(imidazol-4-yl)-2-oxopropyl phosphate + H2O. It functions in the pathway amino-acid biosynthesis; L-histidine biosynthesis; L-histidine from 5-phospho-alpha-D-ribose 1-diphosphate: step 6/9. This Desulfosudis oleivorans (strain DSM 6200 / JCM 39069 / Hxd3) (Desulfococcus oleovorans) protein is Imidazoleglycerol-phosphate dehydratase.